Reading from the N-terminus, the 478-residue chain is Dynein regulatory complex subunit 4 (478 aa).

The span at 1 to 12 (MAPKRRGKKGKA) shows a compositional bias: basic residues. A disordered region spans residues 1–32 (MAPKRRGKKGKAKGNAVVDGVAPEDMSKEQVE). Residues 1–114 (MAPKRRGKKG…LLYEHQNNLA (114 aa)) form a regulates microtubule-binding region. Coiled coils occupy residues 24–201 (EDMS…DELD) and 243–427 (NNLA…LARV). The tract at residues 115–258 (EVKTEGTVVM…NSLKEQMEDM (144 aa)) is microtubule-binding. The interval 357-478 (QQKTGFKNLV…GPAGLVGAPT (122 aa)) is interaction with SMO.

It belongs to the DRC4 family. In terms of assembly, component of the nexin-dynein regulatory complex (N-DRC). Interacts with microtubules. Interacts with SMO. Interacts (via coiled-coil domains) with RAB3B (in GTP-bound form). Interacts with DRC1. Interacts with DRC7.

Its subcellular location is the cytoplasm. The protein localises to the cytoskeleton. It localises to the cell projection. It is found in the cilium. The protein resides in the flagellum. Its subcellular location is the cilium axoneme. The protein localises to the cilium basal body. It localises to the golgi apparatus. It is found in the flagellum axoneme. Component of the nexin-dynein regulatory complex (N-DRC), a key regulator of ciliary/flagellar motility which maintains the alignment and integrity of the distal axoneme and regulates microtubule sliding in motile axonemes. Plays an important role in the assembly of the N-DRC linker. Plays dual roles at both the primary (or non-motile) cilia to regulate hedgehog signaling and in motile cilia to coordinate cilia movement. Required for proper motile cilia functioning. Positively regulates ciliary smoothened (SMO)-dependent Hedgehog (Hh) signaling pathway by facilitating the trafficking of SMO into the cilium and the stimulation of SMO activity in a GRK2-dependent manner. This chain is Dynein regulatory complex subunit 4 (Gas8), found in Rattus norvegicus (Rat).